The chain runs to 489 residues: Male-specific lethal 1-like 1 (489 aa).

2 disordered regions span residues 126–164 (PMVSNDNNQQREGEQVGAMVGDSSPEDSPSGKHWNVRKG) and 224–311 (VKKD…EDMQ). Residues 179–227 (LLLQLELIEQQQKHLHNKNKEIEDLKAEKEMLMARIERMEHRLQMVKKD) adopt a coiled-coil conformation. The region spanning 347–466 (TVEVPSWRES…LKQQDFDLPW (120 aa)) is the PEHE domain. An interaction with KAT8 HAT domain region spans residues 371-389 (ECLDDSVFLKRHSKLELDE). Residues 380-394 (KRHSKLELDEKRRKR) carry the Bipartite nuclear localization signal motif.

It belongs to the msl-1 family. Component of a multisubunit histone acetyltransferase complex (MSL). Interacts (via PEHE domain) with KAT8 (via HAT domain) and MSL3 (via MRG domain); both interactions are direct.

The protein resides in the nucleus. Its subcellular location is the nucleoplasm. The protein localises to the nucleus speckle. Its function is as follows. Component of histone acetyltransferase complex. Within MSL complex, promotes ubiquitination of histone H2B. The protein is Male-specific lethal 1-like 1 (msl1l1) of Danio rerio (Zebrafish).